Here is a 264-residue protein sequence, read N- to C-terminus: Thymidylate synthase (264 aa).

DUMP is bound at residue R21. Position 51 (H51) interacts with (6R)-5,10-methylene-5,6,7,8-tetrahydrofolate. 126–127 (RR) contacts dUMP. The active-site Nucleophile is the C146. DUMP-binding positions include 166 to 169 (RSGD), N177, and 207 to 209 (HLY). D169 is a (6R)-5,10-methylene-5,6,7,8-tetrahydrofolate binding site. (6R)-5,10-methylene-5,6,7,8-tetrahydrofolate is bound at residue A263.

This sequence belongs to the thymidylate synthase family. Bacterial-type ThyA subfamily. Homodimer.

It is found in the cytoplasm. The enzyme catalyses dUMP + (6R)-5,10-methylene-5,6,7,8-tetrahydrofolate = 7,8-dihydrofolate + dTMP. It functions in the pathway pyrimidine metabolism; dTTP biosynthesis. Its function is as follows. Catalyzes the reductive methylation of 2'-deoxyuridine-5'-monophosphate (dUMP) to 2'-deoxythymidine-5'-monophosphate (dTMP) while utilizing 5,10-methylenetetrahydrofolate (mTHF) as the methyl donor and reductant in the reaction, yielding dihydrofolate (DHF) as a by-product. This enzymatic reaction provides an intracellular de novo source of dTMP, an essential precursor for DNA biosynthesis. In Xanthomonas oryzae pv. oryzae (strain MAFF 311018), this protein is Thymidylate synthase.